A 64-amino-acid polypeptide reads, in one-letter code: Large ribosomal subunit protein bL32 (64 aa).

The span at 1-15 shows a compositional bias: basic residues; it reads MAVPKRKVSKSRRDS. A disordered region spans residues 1-21; it reads MAVPKRKVSKSRRDSRRAQTF.

It belongs to the bacterial ribosomal protein bL32 family.

This Symbiobacterium thermophilum (strain DSM 24528 / JCM 14929 / IAM 14863 / T) protein is Large ribosomal subunit protein bL32.